We begin with the raw amino-acid sequence, 285 residues long: MKQRLIIYAQLMRLDRPVGIFLLLWPTLWALWIAGAGQPDPKVLLVFVAGVALMRSAGCVINDFADRAFDPHVKRTINRPLATGKASSQEALLLFAGLCLVAFGLVLLLNPLTIGLSFAGALLAATYPFMKRYTHWPQAYLGAAFGWAVPMAFAAQTGTVPIAAWLLFIATVLWATVYDTFYGMVDREDDLLIGVKSTAILFGEGDRLVTALLQGALLLLLFWIGYREGLGFYYYLGLAIAAGFAGYQQYLLRSREPAQYFRAFLNNNAFGAVIFGGIALHYLTA.

Transmembrane regions (helical) follow at residues 17 to 37 (PVGI…AGAG), 41 to 61 (PKVL…GCVI), 92 to 112 (LLLF…LNPL), 135 to 155 (HWPQ…AFAA), 158 to 178 (GTVP…ATVY), 216 to 236 (ALLL…YYYL), and 263 to 283 (AFLN…LHYL).

This sequence belongs to the UbiA prenyltransferase family. Requires Mg(2+) as cofactor.

It is found in the cell inner membrane. It carries out the reaction all-trans-octaprenyl diphosphate + 4-hydroxybenzoate = 4-hydroxy-3-(all-trans-octaprenyl)benzoate + diphosphate. Its pathway is cofactor biosynthesis; ubiquinone biosynthesis. Its function is as follows. Catalyzes the prenylation of para-hydroxybenzoate (PHB) with an all-trans polyprenyl group. Mediates the second step in the final reaction sequence of ubiquinone-8 (UQ-8) biosynthesis, which is the condensation of the polyisoprenoid side chain with PHB, generating the first membrane-bound Q intermediate 3-octaprenyl-4-hydroxybenzoate. The sequence is that of 4-hydroxybenzoate octaprenyltransferase from Nitrosococcus oceani (strain ATCC 19707 / BCRC 17464 / JCM 30415 / NCIMB 11848 / C-107).